The primary structure comprises 439 residues: Proline--tRNA ligase (439 aa).

The protein belongs to the class-II aminoacyl-tRNA synthetase family. ProS type 2 subfamily. Homodimer.

The protein localises to the cytoplasm. The catalysed reaction is tRNA(Pro) + L-proline + ATP = L-prolyl-tRNA(Pro) + AMP + diphosphate. Functionally, catalyzes the attachment of proline to tRNA(Pro) in a two-step reaction: proline is first activated by ATP to form Pro-AMP and then transferred to the acceptor end of tRNA(Pro). This Rhodopseudomonas palustris (strain BisA53) protein is Proline--tRNA ligase.